The sequence spans 1458 residues: GTPase-activating protein and VPS9 domain-containing protein 1 (1458 aa).

The region spanning 147–385 (SYLLQVLRYL…AAFLDVVIGG (239 aa)) is the Ras-GAP domain. S227 is modified (phosphoserine). Phosphothreonine occurs at positions 390 and 458. The tract at residues 447–475 (AKPGKSSSLDMTPYSTPQMSPATTPANKK) is disordered. Positions 451-473 (KSSSLDMTPYSTPQMSPATTPAN) are enriched in polar residues. Residue Y460 is modified to Phosphotyrosine. At S466 the chain carries Phosphoserine. T470 is subject to Phosphothreonine. A phosphoserine mark is found at S566 and S569. Disordered regions lie at residues 574-608 (GISE…GSNG), 738-821 (LESC…PSQS), and 846-867 (HYAR…VGGN). The segment covering 578–588 (GPSNRSNSVSS) has biased composition (polar residues). A phosphoserine mark is found at S742, S746, and S757. The span at 758-777 (SRPSTPGLSVVSGISATSED) shows a compositional bias: polar residues. T762 carries the phosphothreonine modification. S766 carries the post-translational modification Phosphoserine. A compositionally biased stretch (basic and acidic residues) spans 778–789 (IPNKIEDLRSEC). Residues S876, S902, S903, S908, and S914 each carry the phosphoserine modification. Residues 888 to 902 (KQRHSYPERLVRSRS) are compositionally biased toward basic and acidic residues. Disordered stretches follow at residues 888–1022 (KQRH…RLSA) and 1039–1072 (KRTS…EEAL). Positions 930–951 (AAATGATSLVAAPHSSSSSPSK) are enriched in low complexity. Basic and acidic residues-rich tracts occupy residues 952–973 (DSSR…DRSR) and 995–1006 (EKQEKDKDDLGP). A Phosphoserine modification is found at S964. The segment covering 1010 to 1022 (STLTDEPSPRLSA) has biased composition (polar residues). Phosphoserine is present on residues S1017 and S1044. Residues 1061–1071 (ESAHDSPREEA) are compositionally biased toward basic and acidic residues. A phosphoserine mark is found at S1076 and S1083. The region spanning 1318–1458 (ILRDQVLHEH…EFIKTIDDRK (141 aa)) is the VPS9 domain.

Belongs to the GAPVD1 family. As to quaternary structure, interacts with RAB5A. Interacts with TRIP10/CIP4. In terms of tissue distribution, present in adipocytes and fibroblasts (at protein level). Ubiquitously expressed.

It localises to the membrane. The protein resides in the endosome. Acts both as a GTPase-activating protein (GAP) and a guanine nucleotide exchange factor (GEF), and participates in various processes such as endocytosis, insulin receptor internalization or LC2A4/GLUT4 trafficking. Acts as a GEF for the Ras-related protein RAB31 by exchanging bound GDP for free GTP, leading to regulate LC2A4/GLUT4 trafficking. In the absence of insulin, it maintains RAB31 in an active state and promotes a futile cycle between LC2A4/GLUT4 storage vesicles and early endosomes, retaining LC2A4/GLUT4 inside the cells. Upon insulin stimulation, it is translocated to the plasma membrane, releasing LC2A4/GLUT4 from intracellular storage vesicles. Also involved in EGFR trafficking and degradation, possibly by promoting EGFR ubiquitination and subsequent degradation by the proteasome. Has GEF activity for Rab5 and GAP activity for Ras. This is GTPase-activating protein and VPS9 domain-containing protein 1 (Gapvd1) from Mus musculus (Mouse).